A 530-amino-acid chain; its full sequence is MASAGSTARRAGSGSWHSERGEGRGARPQPTPSGSMQQANKVSLKATWTDAESKQPSQPLPDLADHLSAQATALARPRRPASLTPPRADPSPSKESDQTAIDQTAIGSYYQLFAAAVGNVEWLRFCLNQSLREIPTDDKGFTAIHFAAQWGKLACLQVLVEEYKFPVDLLTNNSQTPLHLVIHRDNTTVALPCIYYLLEKGADLNAQTCNGSTPLHLAARDGLLDCVKVLVQSGANVHAQDAMGYKPIDFCKIWNHRACARFLKDAMWKKDKKDFAREMTKMKMFKSQLTLMEHNYLIEYQKEHKILREAAIRKWLHGKLHPGHSLVSNTKQARATALSKTPEQRESQRSRSFHPSVDARLQCIPQPTEMPKPIYRKPTVKRPTMWNVSNNPARPPTTQISHSQGIRLGVHPDPTPEHDFSSFLEVRPDGHGGARLHTVDGHWVAPVPRLPFEVLLRMLYPRVWPYRMKVPQGFYPISMREVPRKRHLGDNTFWTDTLAMNLRDTFDEAFLAAVRSHQGLPTLPSPQTNP.

Low complexity predominate over residues 1–15 (MASAGSTARRAGSGS). The disordered stretch occupies residues 1 to 99 (MASAGSTARR…PSPSKESDQT (99 aa)). Positions 32–41 (PSGSMQQANK) are enriched in polar residues. 3 ANK repeats span residues 139-169 (KGFTAIHFAAQWGKLACLQVLVEEYKFPVDL), 173-206 (NSQTPLHLVIHRDNTTVALPCIYYLLEKGADLNA), and 210-239 (NGSTPLHLAARDGLLDCVKVLVQSGANVHA). 2 disordered regions span residues 323-360 (GHSLVSNTKQARATALSKTPEQRESQRSRSFHPSVDAR) and 383-402 (PTMWNVSNNPARPPTTQISH). Polar residues-rich tracts occupy residues 326–341 (LVSNTKQARATALSKT) and 386–402 (WNVSNNPARPPTTQISH).

In terms of assembly, interacts with PSRC1; recruited by PSRC1 to the spindle during mitosis. Phosphorylated during mitosis.

It is found in the cytoplasm. The protein localises to the cytoskeleton. Its subcellular location is the spindle. It localises to the spindle pole. In terms of biological role, required for normal progression through mitosis. Involved in chromosome alignment and cytokinesis via regulation of microtubules polymerization. This chain is Ankyrin repeat domain-containing protein 53 (ANKRD53), found in Homo sapiens (Human).